The chain runs to 211 residues: Thymidylate kinase (211 aa).

Glycine 11 to threonine 18 contacts ATP.

The protein belongs to the thymidylate kinase family.

The enzyme catalyses dTMP + ATP = dTDP + ADP. Its function is as follows. Phosphorylation of dTMP to form dTDP in both de novo and salvage pathways of dTTP synthesis. The chain is Thymidylate kinase from Streptococcus pyogenes serotype M6 (strain ATCC BAA-946 / MGAS10394).